Here is a 222-residue protein sequence, read N- to C-terminus: Inositol diphosphatase DSP1 (222 aa).

Residues 1-14 (MRQEATCSLVLTQD) show a composition bias toward polar residues. The interval 1–41 (MRQEATCSLVLTQDAQHRKNQPPLAEEDDDRDHTDDAMPPP) is disordered. The Tyrosine-protein phosphatase domain maps to 68-222 (NFAMVDHGVY…LKHLPASFSC (155 aa)). The interval 124-136 (FGIDGSKEPFVNI) is WPD loop important for active site topology. The 1D-myo-inositol hexakisphosphate site is built by N135, I136, and R140. Residue C160 is the Phosphocysteine intermediate of the active site.

Belongs to the protein-tyrosine phosphatase family. Atypical dual-specificity phosphatase Siw14-like subfamily.

It localises to the nucleus. The protein resides in the cytoplasm. It carries out the reaction 5-diphospho-1D-myo-inositol 1,2,3,4,6-pentakisphosphate + H2O = 1D-myo-inositol hexakisphosphate + phosphate + H(+). The catalysed reaction is 1,5-bis(diphospho)-1D-myo-inositol 2,3,4,6-tetrakisphosphate + H2O = 1-diphospho-1D-myo-inositol 2,3,4,5,6-pentakisphosphate + phosphate + 2 H(+). The enzyme catalyses 3,5-bis(diphospho)-1D-myo-inositol 1,2,4,6-tetrakisphosphate + H2O = 3-diphospho-1D-myo-inositol 1,2,4,5,6-pentakisphosphate + phosphate + 2 H(+). It catalyses the reaction 6-diphospho-1D-myo-inositol pentakisphosphate + H2O = 1D-myo-inositol hexakisphosphate + phosphate + H(+). In terms of biological role, cleaves the beta-phosphate at the 5-position of soluble inositol pyrophosphates. Has highest activity on 5-diphosphoinositol 1,2,3,4,6-pentakisphosphate (5-InsP(7)). Possesses phosphotyrosine phosphatase activity in vitro. May contribute to regulation of drought stress responses. The chain is Inositol diphosphatase DSP1 from Oryza sativa subsp. japonica (Rice).